The chain runs to 105 residues: Phosphoribosyl-AMP cyclohydrolase (105 aa).

Asp-72 provides a ligand contact to Mg(2+). A Zn(2+)-binding site is contributed by Cys-73. Residues Asp-74 and Asp-76 each coordinate Mg(2+). Cys-89 and Cys-96 together coordinate Zn(2+).

Belongs to the PRA-CH family. As to quaternary structure, homodimer. Mg(2+) is required as a cofactor. Requires Zn(2+) as cofactor.

Its subcellular location is the cytoplasm. The enzyme catalyses 1-(5-phospho-beta-D-ribosyl)-5'-AMP + H2O = 1-(5-phospho-beta-D-ribosyl)-5-[(5-phospho-beta-D-ribosylamino)methylideneamino]imidazole-4-carboxamide. It participates in amino-acid biosynthesis; L-histidine biosynthesis; L-histidine from 5-phospho-alpha-D-ribose 1-diphosphate: step 3/9. Its function is as follows. Catalyzes the hydrolysis of the adenine ring of phosphoribosyl-AMP. This Listeria monocytogenes serovar 1/2a (strain ATCC BAA-679 / EGD-e) protein is Phosphoribosyl-AMP cyclohydrolase.